The sequence spans 262 residues: Pyridoxine 5'-phosphate synthase (262 aa).

Asparagine 6 lines the 3-amino-2-oxopropyl phosphate pocket. 8-9 (DH) is a binding site for 1-deoxy-D-xylulose 5-phosphate. A 3-amino-2-oxopropyl phosphate-binding site is contributed by arginine 17. Histidine 43 acts as the Proton acceptor in catalysis. The 1-deoxy-D-xylulose 5-phosphate site is built by arginine 45 and histidine 50. Catalysis depends on glutamate 70, which acts as the Proton acceptor. Threonine 102 contributes to the 1-deoxy-D-xylulose 5-phosphate binding site. Catalysis depends on histidine 215, which acts as the Proton donor. 3-amino-2-oxopropyl phosphate contacts are provided by residues glycine 216 and 237–238 (GH).

It belongs to the PNP synthase family. In terms of assembly, homooctamer; tetramer of dimers.

It is found in the cytoplasm. It carries out the reaction 3-amino-2-oxopropyl phosphate + 1-deoxy-D-xylulose 5-phosphate = pyridoxine 5'-phosphate + phosphate + 2 H2O + H(+). It functions in the pathway cofactor biosynthesis; pyridoxine 5'-phosphate biosynthesis; pyridoxine 5'-phosphate from D-erythrose 4-phosphate: step 5/5. Functionally, catalyzes the complicated ring closure reaction between the two acyclic compounds 1-deoxy-D-xylulose-5-phosphate (DXP) and 3-amino-2-oxopropyl phosphate (1-amino-acetone-3-phosphate or AAP) to form pyridoxine 5'-phosphate (PNP) and inorganic phosphate. This is Pyridoxine 5'-phosphate synthase from Helicobacter pylori (strain ATCC 700392 / 26695) (Campylobacter pylori).